We begin with the raw amino-acid sequence, 386 residues long: Branched-chain-amino-acid aminotransferase, cytosolic (386 aa).

Position 1 is an N-acetylmethionine (Met-1). Lys-222 is modified (N6-(pyridoxal phosphate)lysine).

The protein belongs to the class-IV pyridoxal-phosphate-dependent aminotransferase family. In terms of assembly, homodimer. Pyridoxal 5'-phosphate serves as cofactor. As to expression, expressed in brain and kidney. Overexpressed in MYC-induced brain tumors, lymphomas, as well as in a teratocarcinoma cell line.

It is found in the cytoplasm. It carries out the reaction L-leucine + 2-oxoglutarate = 4-methyl-2-oxopentanoate + L-glutamate. The catalysed reaction is L-isoleucine + 2-oxoglutarate = (S)-3-methyl-2-oxopentanoate + L-glutamate. It catalyses the reaction L-valine + 2-oxoglutarate = 3-methyl-2-oxobutanoate + L-glutamate. Functionally, catalyzes the first reaction in the catabolism of the essential branched chain amino acids leucine, isoleucine, and valine. This is Branched-chain-amino-acid aminotransferase, cytosolic (Bcat1) from Mus musculus (Mouse).